The sequence spans 2103 residues: Orsellinic acid synthase (2103 aa).

Residues 17–232 form an N-terminal acylcarrier protein transacylase domain (SAT) region; sequence DAVHDLNVRS…KRPELAHATI (216 aa). The Ketosynthase family 3 (KS3) domain maps to 348-782; it reads ADAIAVVGMS…GGNVSMLLQD (435 aa). Active-site for beta-ketoacyl synthase activity residues include cysteine 525, histidine 660, and histidine 702. A malonyl-CoA:ACP transacylase (MAT) domain region spans residues 881-1197; that stretch reads VFTFTGQGAQ…RRGGDDWQSV (317 aa). Serine 973 (for acyl/malonyl transferase activity) is an active-site residue. The tract at residues 1272-1409 is N-terminal hotdog fold; it reads HAVEKLQREE…GQPDSAVRRD (138 aa). The region spanning 1272–1582 is the PKS/mFAS DH domain; it reads HAVEKLQREE…FKKLERDFFA (311 aa). Residues 1303–1579 are product template (PT) domain; it reads GHVVDESAIC…DICFKKLERD (277 aa). Histidine 1304 (proton acceptor; for dehydratase activity) is an active-site residue. The interval 1433–1582 is C-terminal hotdog fold; the sequence is VHAMDTALFY…FKKLERDFFA (150 aa). Aspartate 1493 acts as the Proton donor; for dehydratase activity in catalysis. Positions 1592–1638 are disordered; it reads STKPVAAAPAKSMAKRARQLAPSPSPSSSSGSNTPMSRSPTPSSVSD. 2 stretches are compositionally biased toward low complexity: residues 1594–1603 and 1617–1631; these read KPVAAAPAKS and PSSSSGSNTPMSRSP. Carrier domains lie at 1640–1716 and 1741–1815; these read VDLG…GGSA and PAPS…DDDA. Serine 1676 bears the O-(pantetheine 4'-phosphoryl)serine mark. Positions 1722–1743 are disordered; the sequence is EDITKPTPSPEQTQARKQGPAP. Serine 1775 carries the post-translational modification O-(pantetheine 4'-phosphoryl)serine. The tract at residues 1809 to 1838 is disordered; sequence EALDDDAEEESAPAQTSTNPAKETTIDSSR. Residues 1810–1819 are compositionally biased toward acidic residues; it reads ALDDDAEEES. A compositionally biased stretch (polar residues) spans 1823 to 1836; it reads QTSTNPAKETTIDS. Residues 1849-2082 form a thioesterase (TE) domain region; the sequence is ASYIHLKALP…TVNGDHFSMM (234 aa).

The catalysed reaction is 3 malonyl-CoA + acetyl-CoA + 2 H(+) = orsellinate + 3 CO2 + 4 CoA. It participates in secondary metabolite biosynthesis. In terms of biological role, non-reducing polyketide synthase; part of the gene cluster that mediates the biosynthesis of orsellinic acid, as well as of the cathepsin K inhibitors F9775 A and F9775 B. The non-reducing polyketide synthase orsA produces orsellinic acid by condensing acetyl-CoA with 3 malonyl-CoA units. Further modifications by the decarboxylase orsB and the tyrosinase-like protein orsC lead to the production of F9775 A and F9775 B. The functions of orsD and orsE remain unclear since only orsB and orsC are required to convert orsellinic acid into F9775 A and F9775 B. This Emericella nidulans (strain FGSC A4 / ATCC 38163 / CBS 112.46 / NRRL 194 / M139) (Aspergillus nidulans) protein is Orsellinic acid synthase.